Reading from the N-terminus, the 577-residue chain is Steryl-sulfatase (577 aa).

A signal peptide spans 1–19 (MLWPCLLALLLSQLNFLCA). Topologically, residues 21–183 (RPGPGPNFLL…GTVFGSAQQV (163 aa)) are lumenal. 2 residues coordinate Ca(2+): D34 and D35. The N-linked (GlcNAc...) asparagine glycan is linked to N46. C74 contacts Ca(2+). The active-site Nucleophile is the C74. A 3-oxoalanine (Cys) modification is found at C74. H135 is an active-site residue. 2 disulfides stabilise this stretch: C140–C147 and C169–C241. The helical transmembrane segment at 184–207 (FVVLPMNILGAVLLAMALARWAGL) threads the bilayer. Over 208–211 (ARPP) the chain is Cytoplasmic. Residues 212–233 (GWVFGVTVAAMAAVGGAYVAFL) traverse the membrane as a helical segment. The Lumenal segment spans residues 234-577 (YHFRPANCFL…PLACRCAGDG (344 aa)). A glycan (N-linked (GlcNAc...) asparagine) is linked at N332. 2 residues coordinate Ca(2+): D341 and H342. Disulfide bonds link C445–C488, C480–C486, and C561–C571. An N-linked (GlcNAc...) asparagine glycan is attached at N458.

The protein belongs to the sulfatase family. Homodimer. It depends on Ca(2+) as a cofactor. In terms of processing, the conversion to 3-oxoalanine (also known as C-formylglycine, FGly), of a serine or cysteine residue in prokaryotes and of a cysteine residue in eukaryotes, is critical for catalytic activity.

The protein localises to the microsome membrane. The protein resides in the endoplasmic reticulum membrane. The enzyme catalyses dehydroepiandrosterone 3-sulfate + H2O = 3beta-hydroxyandrost-5-en-17-one + sulfate + H(+). It carries out the reaction estrone 3-sulfate + H2O = estrone + sulfate + H(+). Functionally, catalyzes the conversion of sulfated steroid precursors, such as dehydroepiandrosterone sulfate (DHEA-S) and estrone sulfate to the free steroid. This is Steryl-sulfatase (Sts) from Rattus norvegicus (Rat).